Reading from the N-terminus, the 210-residue chain is Ribosomal RNA small subunit methyltransferase G (210 aa).

S-adenosyl-L-methionine-binding positions include glycine 76, methionine 81, valine 127–glutamate 128, and arginine 145.

Belongs to the methyltransferase superfamily. RNA methyltransferase RsmG family.

The protein localises to the cytoplasm. It catalyses the reaction guanosine(527) in 16S rRNA + S-adenosyl-L-methionine = N(7)-methylguanosine(527) in 16S rRNA + S-adenosyl-L-homocysteine. Specifically methylates the N7 position of guanine in position 527 of 16S rRNA. The chain is Ribosomal RNA small subunit methyltransferase G from Acinetobacter baumannii (strain SDF).